Consider the following 159-residue polypeptide: Lipoprotein signal peptidase (159 aa).

Transmembrane regions (helical) follow at residues proline 59–phenylalanine 79 and phenylalanine 87–leucine 107. Residues aspartate 113 and aspartate 139 contribute to the active site. The chain crosses the membrane as a helical span at residues leucine 131 to isoleucine 151.

Belongs to the peptidase A8 family.

It is found in the cell inner membrane. The enzyme catalyses Release of signal peptides from bacterial membrane prolipoproteins. Hydrolyzes -Xaa-Yaa-Zaa-|-(S,diacylglyceryl)Cys-, in which Xaa is hydrophobic (preferably Leu), and Yaa (Ala or Ser) and Zaa (Gly or Ala) have small, neutral side chains.. It participates in protein modification; lipoprotein biosynthesis (signal peptide cleavage). In terms of biological role, this protein specifically catalyzes the removal of signal peptides from prolipoproteins. This Chlorobium phaeobacteroides (strain BS1) protein is Lipoprotein signal peptidase.